We begin with the raw amino-acid sequence, 166 residues long: Large ribosomal subunit protein mL41 (166 aa).

Residues 1–26 constitute a mitochondrion transit peptide; the sequence is MNNCIKVVPIALRCQQRTISTSSVLE. The segment at 136–166 is disordered; it reads KDGSAKEPSVNEQLTPEEALQRARKTGSDIF.

The protein belongs to the mitochondrion-specific ribosomal protein mL41 family. As to quaternary structure, component of the mitochondrial ribosome large subunit (39S) which comprises a 16S rRNA and about 50 distinct proteins.

The protein localises to the mitochondrion. This Drosophila melanogaster (Fruit fly) protein is Large ribosomal subunit protein mL41 (mRpL41).